A 746-amino-acid polypeptide reads, in one-letter code: Teichoic acid poly(glycerol phosphate) polymerase (746 aa).

CDP-glycerol is bound by residues 473-477 (WHGTP), R540, 573-574 (PT), 610-612 (RMH), 652-653 (SS), and D657.

Belongs to the CDP-glycerol glycerophosphotransferase family.

It localises to the cell membrane. The enzyme catalyses 4-O-[(2R)-glycerylphospho]-N-acetyl-beta-D-mannosaminyl-(1-&gt;4)-N-acetyl-alpha-D-glucosaminyl di-trans,octa-cis-undecaprenyl diphosphate + n CDP-glycerol = 4-O-{[(2R)-1-glycerylphospho](n)-(2R)-1-glycerylphospho}-N-acetyl-beta-D-mannosaminyl-(1-&gt;4)-N-acetyl-alpha-D-glucosaminyl undecaprenyl diphosphate + n CMP + n H(+). It participates in cell wall biogenesis; poly(glycerol phosphate) teichoic acid biosynthesis. Functionally, responsible for the polymerization of the main chain of the major teichoic acid by sequential transfer of glycerol phosphate units from CDP-glycerol to the disaccharide linkage unit. Synthesizes polymers of approximately 35 glycerol phosphate units in length. This Bacillus subtilis (strain 168) protein is Teichoic acid poly(glycerol phosphate) polymerase (tagF).